A 283-amino-acid polypeptide reads, in one-letter code: Calpastatin (283 aa).

Positions 1–15 (MNPTETKAIPVSQQM) are enriched in polar residues. 2 disordered regions span residues 1–186 (MNPT…SDPM) and 212–283 (NEGI…KVEK). Residues 21–30 (PNKKKHKKQA) are compositionally biased toward basic residues. K32 is covalently cross-linked (Glycyl lysine isopeptide (Lys-Gly) (interchain with G-Cter in SUMO2)). Residues 46-65 (VVHEKKSQEGKPKEHTEQKS) are compositionally biased toward basic and acidic residues. Position 50 is an N6-acetyllysine (K50). S87 is subject to Phosphoserine. Residues 107–122 (VSAGGESVAGVAATSG) are compositionally biased toward low complexity. S133 is modified (phosphoserine). At T135 the chain carries Phosphothreonine. One copy of the Inhibitory domain 1 repeat lies at 170-222 (IEEENTTYTGPEVSDPMSSTYIEELGKREVTIPPKYRELLAKNEGITGPPADS). Phosphoserine is present on residues S222 and S243. Over residues 249–258 (KKTEKEESTE) the composition is skewed to basic and acidic residues.

It belongs to the protease inhibitor I27 (calpastatin) family.

Specific inhibition of calpain (calcium-dependent cysteine protease). Plays a key role in postmortem tenderization of meat and have been proposed to be involved in muscle protein degradation in living tissue. In Chlorocebus aethiops (Green monkey), this protein is Calpastatin (CAST).